The primary structure comprises 461 residues: Methylenetetrahydrofolate--tRNA-(uracil-5-)-methyltransferase TrmFO (461 aa).

An FAD-binding site is contributed by 16 to 21 (GAGLAG).

It belongs to the MnmG family. TrmFO subfamily. The cofactor is FAD.

It is found in the cytoplasm. The catalysed reaction is uridine(54) in tRNA + (6R)-5,10-methylene-5,6,7,8-tetrahydrofolate + NADH + H(+) = 5-methyluridine(54) in tRNA + (6S)-5,6,7,8-tetrahydrofolate + NAD(+). It carries out the reaction uridine(54) in tRNA + (6R)-5,10-methylene-5,6,7,8-tetrahydrofolate + NADPH + H(+) = 5-methyluridine(54) in tRNA + (6S)-5,6,7,8-tetrahydrofolate + NADP(+). Its function is as follows. Catalyzes the folate-dependent formation of 5-methyl-uridine at position 54 (M-5-U54) in all tRNAs. In Parasynechococcus marenigrum (strain WH8102), this protein is Methylenetetrahydrofolate--tRNA-(uracil-5-)-methyltransferase TrmFO.